A 123-amino-acid polypeptide reads, in one-letter code: Large ribosomal subunit protein bL20 (123 aa).

Belongs to the bacterial ribosomal protein bL20 family.

In terms of biological role, binds directly to 23S ribosomal RNA and is necessary for the in vitro assembly process of the 50S ribosomal subunit. It is not involved in the protein synthesizing functions of that subunit. In Chlamydia trachomatis serovar L2b (strain UCH-1/proctitis), this protein is Large ribosomal subunit protein bL20.